The chain runs to 329 residues: Ribosomal RNA small subunit methyltransferase H (329 aa).

S-adenosyl-L-methionine is bound by residues 34–36 (GGH), Asp-59, Phe-86, Asp-112, and Gln-119.

Belongs to the methyltransferase superfamily. RsmH family.

The protein resides in the cytoplasm. The catalysed reaction is cytidine(1402) in 16S rRNA + S-adenosyl-L-methionine = N(4)-methylcytidine(1402) in 16S rRNA + S-adenosyl-L-homocysteine + H(+). Specifically methylates the N4 position of cytidine in position 1402 (C1402) of 16S rRNA. The polypeptide is Ribosomal RNA small subunit methyltransferase H (Chlorobium phaeobacteroides (strain DSM 266 / SMG 266 / 2430)).